Consider the following 100-residue polypeptide: Urease subunit gamma (100 aa).

This sequence belongs to the urease gamma subunit family. In terms of assembly, heterotrimer of UreA (gamma), UreB (beta) and UreC (alpha) subunits. Three heterotrimers associate to form the active enzyme.

The protein localises to the cytoplasm. The enzyme catalyses urea + 2 H2O + H(+) = hydrogencarbonate + 2 NH4(+). It participates in nitrogen metabolism; urea degradation; CO(2) and NH(3) from urea (urease route): step 1/1. The polypeptide is Urease subunit gamma (Pseudomonas syringae pv. syringae (strain B728a)).